The sequence spans 212 residues: Imidazole glycerol phosphate synthase subunit HisH (212 aa).

Positions 1 to 212 (MLAILDYKAG…YEYCKEVSDA (212 aa)) constitute a Glutamine amidotransferase type-1 domain. Catalysis depends on cysteine 79, which acts as the Nucleophile. Catalysis depends on residues histidine 187 and glutamate 189.

As to quaternary structure, heterodimer of HisH and HisF.

Its subcellular location is the cytoplasm. It carries out the reaction 5-[(5-phospho-1-deoxy-D-ribulos-1-ylimino)methylamino]-1-(5-phospho-beta-D-ribosyl)imidazole-4-carboxamide + L-glutamine = D-erythro-1-(imidazol-4-yl)glycerol 3-phosphate + 5-amino-1-(5-phospho-beta-D-ribosyl)imidazole-4-carboxamide + L-glutamate + H(+). The catalysed reaction is L-glutamine + H2O = L-glutamate + NH4(+). It functions in the pathway amino-acid biosynthesis; L-histidine biosynthesis; L-histidine from 5-phospho-alpha-D-ribose 1-diphosphate: step 5/9. In terms of biological role, IGPS catalyzes the conversion of PRFAR and glutamine to IGP, AICAR and glutamate. The HisH subunit catalyzes the hydrolysis of glutamine to glutamate and ammonia as part of the synthesis of IGP and AICAR. The resulting ammonia molecule is channeled to the active site of HisF. This chain is Imidazole glycerol phosphate synthase subunit HisH, found in Maridesulfovibrio salexigens (strain ATCC 14822 / DSM 2638 / NCIMB 8403 / VKM B-1763) (Desulfovibrio salexigens).